The primary structure comprises 335 residues: DNA-directed RNA polymerase subunit alpha (335 aa).

Residues 1 to 233 (MMLNATEFLT…QQISIFVDLE (233 aa)) are alpha N-terminal domain (alpha-NTD). Residues 247-335 (VDPVLLRPVD…VDDRFSYRSR (89 aa)) are alpha C-terminal domain (alpha-CTD).

It belongs to the RNA polymerase alpha chain family. In terms of assembly, homodimer. The RNAP catalytic core consists of 2 alpha, 1 beta, 1 beta' and 1 omega subunit. When a sigma factor is associated with the core the holoenzyme is formed, which can initiate transcription.

The catalysed reaction is RNA(n) + a ribonucleoside 5'-triphosphate = RNA(n+1) + diphosphate. DNA-dependent RNA polymerase catalyzes the transcription of DNA into RNA using the four ribonucleoside triphosphates as substrates. The polypeptide is DNA-directed RNA polymerase subunit alpha (Psychrobacter arcticus (strain DSM 17307 / VKM B-2377 / 273-4)).